The following is a 349-amino-acid chain: Ferredoxin--NADP reductase 1 (349 aa).

Positions 36, 44, 48, 88, 123, 290, and 331 each coordinate FAD.

Belongs to the ferredoxin--NADP reductase type 2 family. Homodimer. The cofactor is FAD.

It catalyses the reaction 2 reduced [2Fe-2S]-[ferredoxin] + NADP(+) + H(+) = 2 oxidized [2Fe-2S]-[ferredoxin] + NADPH. This Bacillus thuringiensis (strain Al Hakam) protein is Ferredoxin--NADP reductase 1.